Here is a 113-residue protein sequence, read N- to C-terminus: Ribosome-associated factor Y (113 aa).

Residue lysine 66 is modified to N6-acetyllysine. The segment at 91–113 (KGEARRAATSVKDANFVEEVEEE) is disordered.

It belongs to the HPF/YfiA ribosome-associated protein family. YfiA subfamily. In terms of assembly, associates mainly with 70S ribosomes.

During stationary phase, prevents 70S dimer formation, probably in order to regulate translation efficiency during transition between the exponential and the stationary phases. In addition, during environmental stress such as cold shock or excessive cell density at stationary phase, stabilizes the 70S ribosome against dissociation, inhibits translation initiation and increase translation accuracy. When normal growth conditions are restored, is quickly released from the ribosome. In Escherichia coli O157:H7, this protein is Ribosome-associated factor Y.